Here is a 647-residue protein sequence, read N- to C-terminus: 1-phosphatidylinositol 4,5-bisphosphate phosphodiesterase zeta-1 (647 aa).

One can recognise an EF-hand domain in the interval 43-78 (CHFAHVKHIFKENDRQNQGRITIEEFRAIYRCIVHR). The PI-PLC X-box domain occupies 163 to 307 (QDMNHPLSDY…LKFKILVKNR (145 aa)). Catalysis depends on residues histidine 178 and histidine 223. Residues 386 to 502 (LSDLVIYTKA…GYILKPDILR (117 aa)) enclose the PI-PLC Y-box domain. Residues 502–627 (RDTTLGFNPN…KGYRRVPLFS (126 aa)) enclose the C2 domain.

In terms of assembly, interacts via its C2 domain with PtdIns(3)P and, to a lesser extent, PtdIns(5)P in vitro. It depends on Ca(2+) as a cofactor. Highly expressed in postpuberal testis, where expression is sperm cell-specific. Also expressed in brain of both sexes.

Its subcellular location is the nucleus. It is found in the cytoplasm. The protein localises to the perinuclear region. It carries out the reaction a 1,2-diacyl-sn-glycero-3-phospho-(1D-myo-inositol-4,5-bisphosphate) + H2O = 1D-myo-inositol 1,4,5-trisphosphate + a 1,2-diacyl-sn-glycerol + H(+). The production of the second messenger molecules diacylglycerol (DAG) and inositol 1,4,5-trisphosphate (IP3) is mediated by activated phosphatidylinositol-specific phospholipase C enzymes. In vitro, hydrolyzes PtdIns(4,5)P2 in a Ca(2+)-dependent manner. Triggers intracellular Ca(2+) oscillations in oocytes solely during M phase and is involved in inducing oocyte activation and initiating embryonic development up to the blastocyst stage. Is therefore a strong candidate for the egg-activating soluble sperm factor that is transferred from the sperm into the egg cytoplasm following gamete membrane fusion. May exert an inhibitory effect on phospholipase-C-coupled processes that depend on calcium ions and protein kinase C, including CFTR trafficking and function. The polypeptide is 1-phosphatidylinositol 4,5-bisphosphate phosphodiesterase zeta-1 (Mus musculus (Mouse)).